Here is a 525-residue protein sequence, read N- to C-terminus: Sensory neuron membrane protein 1 (525 aa).

Over 1–11 (MLLPKELKYAA) the chain is Cytoplasmic. Residues 12-32 (IAGGVAVFGLIFGWVLFPVIL) traverse the membrane as a helical segment. Residues 33–456 (KGQLKKEMAL…LKHQLFIPKR (424 aa)) are Extracellular-facing. 3 N-linked (GlcNAc...) asparagine glycosylation sites follow: asparagine 67, asparagine 229, and asparagine 324. Intrachain disulfides connect cysteine 268-cysteine 333, cysteine 297-cysteine 352, and cysteine 335-cysteine 341. An N-linked (GlcNAc...) asparagine glycan is attached at asparagine 440. A helical transmembrane segment spans residues 457-477 (VVGVLRWWMVSFGSLGADIGI). At 478 to 525 (VYHFRDHIMRLAVSGDTKVSKVTPEEDPEQKDISVIGPPAQEPAKINI) the chain is on the cytoplasmic side. Residues 497 to 525 (SKVTPEEDPEQKDISVIGPPAQEPAKINI) form a disordered region.

This sequence belongs to the CD36 family.

It localises to the cell membrane. Plays an olfactory role that is not restricted to pheromone sensitivity. In Mamestra brassicae (Cabbage moth), this protein is Sensory neuron membrane protein 1.